The sequence spans 465 residues: Iron-sulfur cluster assembly SufBD family protein SAUSA300_0822 (465 aa).

The protein belongs to the iron-sulfur cluster assembly SufBD family.

This Staphylococcus aureus (strain USA300) protein is Iron-sulfur cluster assembly SufBD family protein SAUSA300_0822.